Reading from the N-terminus, the 2332-residue chain is MNTTDCFIALVQAIREIKALFLSRTTGKMELTLYNGEKKTFYSRPNNHDNCWLNAILQLFRYVEEPFFDWVYSSPENLTLEAIKQLEDLTGLELHEGGPPALVIWNIKHLLHTGIGTASRPSEVCMVDGTDMCLADFHAGIFLKGQEHAVFACVTSNGWYAIDDEDFYPWTPDPSDVLVFVPYDQEPLNGEWKAKVQRKLKGAGQSSPATGSQNQSGNTGSIINNYYMQQYQNSMDTQLGDNAISGGSNEGSTDTTSTHTTNTQNNDWFSKLASSAFSGLFGALLADKKTEETTLLEDRILTTRNGHTTSTTQSSVGVTYGYATAEDFVSGPNTSGLETRVVQAERFFKTHLFDWVTSDSFGRCHLLELPTDHKGVYGSLTDSYAYMRNGWDVEVTAVGNQFNGGCLLVAMVPELYSIQKRELYQLTLFPHQFINPRTNMTAHITVPFVGVNRYDQYKVHKPWTLVVMVVAPLTVNTEGAPQIKVYANIAPTNVHVAGEFPSKEGIFPVACSDGYGGLVTTDPKTADPVYGKVFNPPRNQLPGRFTNLLDVAEACPTFLRFEGGVPYVTTKTDSDRVLAQFDMSLAAKQMSNTFLAGLAQYYTQYSGTINLHFMFTGPTDAKARYMVAYAPPGMEPPKTPEAAAHCIHAEWDTGLNSKFTFSIPYLSAADYAYTASGVAETTNVQGWVCLFQITHGKADGDALVVLASAGKDFELRLPVDARAETTSAGESADPVTTTVENYGGETQIQRRQHTDVSFIMDRFVKVTPQNQINILDLMQIPSHTLVGALLRASTYYFSDLEIAVKHEGDLTWVPNGAPEKALDNTTNPTAYHKAPLTRLALPYTAPHRVLATVYNGECRYNRNAVPNLRGDLQVLAQKVARTLPTSFNYGAIKATRVTELLYRMKRAETYCPRPLLAIHPTEARHKQKIVAPVKQTLNFDLLKLAGDVESNPGPFFFSDVRSNFSKLVETINQMQEDMSTKHGPDFNRLVSAFEELAIGVKAIRTGLDEAKPWYKLIKLLSRLSCMAAVAARSKDPVLVAIMLADTGLEILDSTFVVKKISDSLSSLFHVPAPVFSFGAPVLLAGLVKVASSFFRSTPEDLERAEKQLKARDINDIFAILKNGEWLVKLILAIRDWIKAWIASEEKFVTMTDLVPGILEKQRDLNDPSKYKEAKEWLDNARQACLKSGNVHIANLCKVVAPAPSKSRPEPVVVCLRGKSGQGKSFLANVLAQAISTHFTGRIDSVWYCPPDPDHFDGYNQQTVVVMDDLGQNPDGKDFKYFAQMVSTTGFIPPMASLEDKGKPFNSKVIIATTNLYSGFTPRTMVCPDALNRRFHFDIDVSAKDGYKINSKLDIIKALEDTHANPVAMFQYDCALLNGMAVEMKRMQQDMFKPQPPLQNVYQLVQEVIDRVELHEKVSSHPIFKQISIPSQKSVLYFLIEKGQHEAAIEFFEGMVHDSIKEELRPLIQQTSFVKRAFKRLKENFEIVALCLTLLANIVIMIRETRKRQKMVDDAVNEYIEKANITTDDKTLDEAEKSPLETSGASTVGFRERTLPGQKACDDVNSEPAQPVEEQPQAEGPYAGPLERQKPLKVRAKLPQQEGPYAGPMERQKPLKVKAKAPVVKEGPYEGPVKKPVALKVKAKNLIVTESGAPPTDLQKMVMGNTKPVELILDGKTVAICCATGVFGTAYLVPRHLFAEKYDKIMVDGRAMTDSDYRVFEFEIKVKGQDMLSDAALMVLHRGNRVRDITKHFRDTARMKKGTPVVGVINNADVGRLIFSGEALTYKDIVVCMDGDTMPGLFAYRAATKAGYCGGAVLAKDGADTFIVGTHSAGGNGVGYCSCVSRSMLLKMKAHIDPEPHHEGLIVDTRDVEERVHVMRKTKLAPTVAHGVFNPEFGPAALSNKDPRLNEGVVLDEVIFSKHKGDTKMSEEDKALFRRCAADYASRLHSVLGTANAPLSIYEAIKGVDGLDAMEPDTAPGLPWALQGKRRGALIDFENGTVGPEVEAALKLMEKREYKFVCQTFLKDEIRPLEKVRAGKTRIVDVLPVEHILYTRMMIGRFCAQMHSNNGPQIGSAVGCNPDVDWQRFGTHFAQYRNVWDVDYSAFDANHCSDAMNIMFEEVFRTEFGFHPNAEWILKTLVNTEHAYENKRITVGGGMPSGCSATSIINTILNNIYVLYALRRHYEGVELDTYTMISYGDDIVVASDYDLDFEALKPHFKSLGQTITPADKSDKGFVLGHSITDVTFLKRHFHMDYGTGFYKPVMASKTLEAILSFARRGTIQEKLISVAGLAVHSGPDEYRRLFEPFQGLFEIPSYRSLYLRWVNAVCGDA.

One can recognise a Peptidase C28 domain in the interval 1–201; the sequence is MNTTDCFIAL…WKAKVQRKLK (201 aa). At 1-1480 the chain is on the cytoplasmic side; the sequence is MNTTDCFIAL…SFVKRAFKRL (1480 aa). Catalysis depends on for leader protease activity residues C51, H148, and D163. Disordered regions lie at residues 197–218 and 238–265; these read QRKLKGAGQSSPATGSQNQSGN and QLGDNAISGGSNEGSTDTTSTHTTNTQN. G202 carries the N-myristoyl glycine; by host lipid modification. 2 stretches are compositionally biased toward polar residues: residues 204-218 and 238-251; these read GQSSPATGSQNQSGN and QLGDNAISGGSNEG. Positions 252–265 are enriched in low complexity; sequence STDTTSTHTTNTQN. C406 and C858 are joined by a disulfide. Residues 788–796 are antigenic epitope; it reads ALLRASTYY. The short motif at 869–871 is the Cell attachment site element; sequence RGD. The 165-residue stretch at 1189–1353 folds into the SF3 helicase domain; it reads NVHIANLCKV…DGYKINSKLD (165 aa). 1217 to 1224 is a binding site for ATP; the sequence is GKSGQGKS. An intramembrane segment occupies 1481 to 1501; the sequence is KENFEIVALCLTLLANIVIMI. Residues 1502 to 2332 lie on the Cytoplasmic side of the membrane; that stretch reads RETRKRQKMV…RWVNAVCGDA (831 aa). Positions 1529–1538 are enriched in basic and acidic residues; that stretch reads KTLDEAEKSP. Residues 1529–1584 form a disordered region; the sequence is KTLDEAEKSPLETSGASTVGFRERTLPGQKACDDVNSEPAQPVEEQPQAEGPYAGP. O-(5'-phospho-RNA)-tyrosine is present on residues Y1581, Y1604, and Y1628. The 197-residue stretch at 1652–1848 folds into the Peptidase C3 domain; sequence APPTDLQKMV…YCSCVSRSML (197 aa). The active-site For protease 3C activity; Proton donor/acceptor is H1695. Residues D1733 and C1812 each act as for protease 3C activity in the active site. 2 short sequence motifs (nuclear localization signal) span residues 1878–1886 and 1879–1886; these read MRKTKLAPT and RKTKLAPT. Residues 2096–2214 enclose the RdRp catalytic domain; it reads RNVWDVDYSA…ASDYDLDFEA (119 aa). D2200 (for RdRp activity) is an active-site residue.

The protein belongs to the picornaviruses polyprotein family. As to quaternary structure, interacts with host ISG15. Interacts (via R-G-D motif) with host ITGAV/ITGB6. Interacts with host MAVS; this interaction inhibits binding of host TRAF3 to MAVS, thereby suppressing interferon-mediated responses. In terms of assembly, forms homooligomers. As to quaternary structure, homohexamer. Interacts with host VIM. Interacts with host BECN1. Interacts with host DCTN3. In terms of assembly, interacts with RNA-dependent RNA polymerase; this interaction allows 3B-1 to binds 2 polymerases and act as a primer. It also allows the recruitment of the RNA-dependent RNA polymerase to host membranes. As to quaternary structure, interacts with RNA-dependent RNA polymerase; this interaction allows 3B-2 to act as a primer. Interacts with RNA-dependent RNA polymerase; this interaction allows 3B-3 to act as a primer. In terms of assembly, interacts with 3B-1; this interaction allows 3B-1 to binds 2 polymerases and act as a primer. It also allows the recruitment of the RNA-dependent RNA polymerase to host membranes. Interacts with 3B-2; this interaction allows 3B-2 to act as a primer. Interacts with 3B-3; this interaction allows 3B-3 to act as a primer. In terms of processing, removes six residues from its own C-terminus, generating sLb(pro). Specific enzymatic cleavages in vivo by the viral proteases yield a variety of precursors and mature proteins. The polyprotein seems to be cotranslationally cleaved at the 2A/2B junction by a ribosomal skip from one codon to the next without formation of a peptide bond. This process would release the L-P1-2A peptide from the translational complex. Post-translationally, during virion maturation, immature virions are rendered infectious following cleavage of VP0 into VP4 and VP2. This maturation seems to be an autocatalytic event triggered by the presence of RNA in the capsid and is followed by a conformational change of the particle. In terms of processing, myristoylation is required during RNA encapsidation and formation of the mature virus particle. Uridylylated by the polymerase and covalently linked to the 5'-end of genomic RNA. These uridylylated forms act as a nucleotide-peptide primer for the polymerase. Post-translationally, the disulfide bond between VP1 and VP2 occurs after release of virus from the host cell.

Its subcellular location is the host nucleus. It is found in the host cytoplasm. It localises to the virion. The protein localises to the host endoplasmic reticulum membrane. The protein resides in the host cytoplasmic vesicle membrane. The enzyme catalyses Autocatalytically cleaves itself from the polyprotein of the foot-and-mouth disease virus by hydrolysis of a Lys-|-Gly bond, but then cleaves host cell initiation factor eIF-4G at bonds -Gly-|-Arg- and -Lys-|-Arg-.. It catalyses the reaction a ribonucleoside 5'-triphosphate + H2O = a ribonucleoside 5'-diphosphate + phosphate + H(+). The catalysed reaction is RNA(n) + a ribonucleoside 5'-triphosphate = RNA(n+1) + diphosphate. It carries out the reaction Selective cleavage of Gln-|-Gly bond in the poliovirus polyprotein. In other picornavirus reactions Glu may be substituted for Gln, and Ser or Thr for Gly.. In terms of biological role, autocatalytically cleaves itself from the polyprotein at the L/VP0 junction. Also cleaves the host translation initiation factors EIF4G1 and EIF4G3, in order to shut off the capped cellular mRNA transcription. Plays a role in counteracting host innate antiviral response using diverse mechanisms. Possesses a deubiquitinase activity acting on both 'Lys-48' and 'Lys-63'-linked polyubiquitin chains. In turn, inhibits the ubiquitination and subsequent activation of key signaling molecules of type I IFN response such as host RIGI, TBK1, TRAF3 and TRAF6. Inhibits host NF-kappa-B activity by inducing a decrease in RELA mRNA levels. Cleaves a peptide bond in the C-terminus of host ISG15, resulting in the damaging of this modifier that can no longer be attached to target proteins. Also cleaves host G3BP1 and G3BP2 in order to inhibit cytoplasmic stress granules assembly. Functionally, lies on the inner surface of the capsid shell. After binding to the host receptor, the capsid undergoes conformational changes. Capsid protein VP4 is released, capsid protein VP1 N-terminus is externalized, and together, they shape a pore in the host membrane through which the viral genome is translocated into the host cell cytoplasm. After genome has been released, the channel shrinks. Forms an icosahedral capsid of pseudo T=3 symmetry with capsid proteins VP1 and VP3. The capsid is composed of 60 copies of each capsid protein organized in the form of twelve pentamers and encloses the viral positive strand RNA genome. Upon acidifcation in the endosome, dissociates into pentamers. Its function is as follows. Forms an icosahedral capsid of pseudo T=3 symmetry with capsid proteins VP2 and VP3. The capsid is composed of 60 copies of each capsid protein organized in the form of twelve pentamers and encloses the viral positive strand RNA genome. Mediates cell entry by attachment to an integrin receptor, usually host ITGAV/ITGB6, via a conserved arginine-glycine-aspartic acid (R-G-D) motif. In addition, targets host MAVS to suppress type I IFN pathway. Upon acidifcation in the endosome, dissociates into pentamers. In terms of biological role, forms an icosahedral capsid of pseudo T=3 symmetry with capsid proteins VP0 and VP3. The capsid is composed of 60 copies of each capsid protein organized in the form of twelve pentamers and encloses the viral positive strand RNA genome. Upon acidifcation in the endosome, dissociates into pentamers. Functionally, mediates self-processing of the polyprotein by a translational effect termed 'ribosome skipping'. Mechanistically, 2A-mediated cleavage occurs between the C-terminal glycine and the proline of the downstream protein 2B. In the case of foot-and-mouth disease virus, the 2A oligopeptide is post-translationally 'trimmed' from the C-terminus of the upstream protein 1D by 3C proteinase. Plays an essential role in the virus replication cycle by acting as a viroporin. Creates a pore in the host endoplasmic reticulum and as a consequence releases Ca2+ in the cytoplasm of infected cell. In turn, high levels of cytoplasmic calcium may trigger membrane trafficking and transport of viral ER-associated proteins to viroplasms, sites of viral genome replication. Its function is as follows. Associates with and induces structural rearrangements of intracellular membranes. Triggers host autophagy by interacting with host BECN1 and thereby promotes viral replication. Participates in viral replication and interacts with host DHX9. Displays RNA-binding, nucleotide binding and NTPase activities. May play a role in virion morphogenesis and viral RNA encapsidation by interacting with the capsid protein VP3. In terms of biological role, plays important roles in virus replication, virulence and host range. Cooperates with host DDX56 to inhibit IRF3 nuclear translocation and subsequent type I interferon production. Functionally, covalently linked to the 5'-end of both the positive-strand and negative-strand genomic RNAs. Acts as a genome-linked replication primer. Cysteine protease that generates mature viral proteins from the precursor polyprotein. In addition to its proteolytic activity, binds to viral RNA and thus influences viral genome replication. RNA and substrate bind cooperatively to the protease. Its function is as follows. RNA-directed RNA polymerase 3D-POL replicates genomic and antigenomic RNA by recognizing replications specific signals. Covalently attaches UMP to a tyrosine of VPg, which is used to prime RNA synthesis. The positive stranded RNA genome is first replicated at virus induced membranous vesicles, creating a dsRNA genomic replication form. This dsRNA is then used as template to synthesize positive stranded RNA genomes. ss(+)RNA genomes are either translated, replicated or encapsidated. The sequence is that of Genome polyprotein from Bos taurus (Bovine).